A 278-amino-acid chain; its full sequence is Orotidine 5'-phosphate decarboxylase (278 aa).

The active-site Proton donor is Lys95.

The protein belongs to the OMP decarboxylase family. Type 2 subfamily.

The catalysed reaction is orotidine 5'-phosphate + H(+) = UMP + CO2. It participates in pyrimidine metabolism; UMP biosynthesis via de novo pathway; UMP from orotate: step 2/2. The chain is Orotidine 5'-phosphate decarboxylase from Mycobacterium marinum (strain ATCC BAA-535 / M).